Consider the following 160-residue polypeptide: Major strawberry allergen Fra a 1-2 (160 aa).

This sequence belongs to the BetVI family. As to quaternary structure, monomer. Interacts with AP. In terms of tissue distribution, highly expressed in ripe red fruits. Expressed in roots and white fruits. Expressed at low levels in open flowers.

Involved in the control of flavonoid biosynthesis in fruits, probably by binding directly to natural flavonoids. Binds the natural flavonoid myricetin with affinities in the low micromolar range. This Fragaria ananassa (Strawberry) protein is Major strawberry allergen Fra a 1-2.